The following is a 350-amino-acid chain: Quinone oxidoreductase-like protein 2 (350 aa).

Lysine 36 carries the post-translational modification N6-acetyllysine. Residue lysine 201 is modified to N6-succinyllysine. N6-acetyllysine occurs at positions 302 and 328.

The protein belongs to the zinc-containing alcohol dehydrogenase family. Quinone oxidoreductase subfamily.

The sequence is that of Quinone oxidoreductase-like protein 2 from Rattus norvegicus (Rat).